The chain runs to 80 residues: Saposin-B-Val (80 aa).

The Saposin B-type domain maps to 1–80 (GDVCQDCIQM…CGLVGFCEEV (80 aa)). 3 disulfide bridges follow: C4–C77, C7–C71, and C36–C47. Residue N21 is glycosylated (N-linked (GlcNAc...) (complex) asparagine).

As to quaternary structure, saposin-B is a homodimer. Interacts with GRN; facilitates lysosomal delivery of progranulin from the extracellular space and the biosynthetic pathway. The one residue extended Saposin-B-Val is only found in a minority of the chains.

Saposin-B stimulates the hydrolysis of galacto-cerebroside sulfate by arylsulfatase A (EC 3.1.6.8), GM1 gangliosides by beta-galactosidase (EC 3.2.1.23) and globotriaosylceramide by alpha-galactosidase A (EC 3.2.1.22). Saposin-B forms a solubilizing complex with the substrates of the sphingolipid hydrolases. This chain is Saposin-B-Val (PSAP), found in Sus scrofa (Pig).